The chain runs to 166 residues: ATP synthase subunit b (166 aa).

Residues 10-30 (LLFWMIVSFGIVFVILSKYGF) traverse the membrane as a helical segment.

Belongs to the ATPase B chain family. As to quaternary structure, F-type ATPases have 2 components, F(1) - the catalytic core - and F(0) - the membrane proton channel. F(1) has five subunits: alpha(3), beta(3), gamma(1), delta(1), epsilon(1). F(0) has three main subunits: a(1), b(2) and c(10-14). The alpha and beta chains form an alternating ring which encloses part of the gamma chain. F(1) is attached to F(0) by a central stalk formed by the gamma and epsilon chains, while a peripheral stalk is formed by the delta and b chains.

It localises to the cell inner membrane. Its function is as follows. F(1)F(0) ATP synthase produces ATP from ADP in the presence of a proton or sodium gradient. F-type ATPases consist of two structural domains, F(1) containing the extramembraneous catalytic core and F(0) containing the membrane proton channel, linked together by a central stalk and a peripheral stalk. During catalysis, ATP synthesis in the catalytic domain of F(1) is coupled via a rotary mechanism of the central stalk subunits to proton translocation. Functionally, component of the F(0) channel, it forms part of the peripheral stalk, linking F(1) to F(0). In Parabacteroides distasonis (strain ATCC 8503 / DSM 20701 / CIP 104284 / JCM 5825 / NCTC 11152), this protein is ATP synthase subunit b.